A 194-amino-acid chain; its full sequence is Imidazoleglycerol-phosphate dehydratase (194 aa).

This sequence belongs to the imidazoleglycerol-phosphate dehydratase family.

The protein localises to the cytoplasm. The enzyme catalyses D-erythro-1-(imidazol-4-yl)glycerol 3-phosphate = 3-(imidazol-4-yl)-2-oxopropyl phosphate + H2O. It participates in amino-acid biosynthesis; L-histidine biosynthesis; L-histidine from 5-phospho-alpha-D-ribose 1-diphosphate: step 6/9. In Listeria monocytogenes serotype 4a (strain HCC23), this protein is Imidazoleglycerol-phosphate dehydratase.